Consider the following 218-residue polypeptide: Thiopurine S-methyltransferase (218 aa).

4 residues coordinate S-adenosyl-L-methionine: Trp10, Leu45, Glu66, and Arg123.

It belongs to the class I-like SAM-binding methyltransferase superfamily. TPMT family.

The protein resides in the cytoplasm. The catalysed reaction is S-adenosyl-L-methionine + a thiopurine = S-adenosyl-L-homocysteine + a thiopurine S-methylether.. This Shewanella denitrificans (strain OS217 / ATCC BAA-1090 / DSM 15013) protein is Thiopurine S-methyltransferase.